A 594-amino-acid chain; its full sequence is 3-hydroxy-3-methylglutaryl coenzyme A reductase 2-A (594 aa).

Residues 1–32 form a disordered region; sequence MDVRRRPVKSLSSAKTATAGEPPKSQQQHPKA. Topologically, residues 1-37 are lumenal; sequence MDVRRRPVKSLSSAKTATAGEPPKSQQQHPKASDALP. The helical transmembrane segment at 38–58 threads the bilayer; that stretch reads LPLYLTNGLFFTMFFSVMYFL. The Cytoplasmic portion of the chain corresponds to 59 to 81; sequence LHRWREKIRNSTPLHVVTLSELA. The chain crosses the membrane as a helical span at residues 82 to 102; it reads ALVLLMASVIYLLGFFGIGFV. Residues 103–549 lie on the Lumenal side of the membrane; that stretch reads RSVIRPSPDA…SKESPGSNSR (447 aa). A glycan (N-linked (GlcNAc...) asparagine) is linked at N261. E273 serves as the catalytic Charge relay system. A glycan (N-linked (GlcNAc...) asparagine) is linked at N337. Active-site charge relay system residues include K405 and D481. Residues 550-570 traverse the membrane as a helical segment; the sequence is LLASIVAGSVLAGELSLMSAL. At 571–594 the chain is on the cytoplasmic side; that stretch reads AAGQLVKSHMKYNRSSKDITKLSS. Catalysis depends on H579, which acts as the Proton donor.

It belongs to the HMG-CoA reductase family. In terms of tissue distribution, mostly expressed in the petioles of seedlings, seedlings and roots, and, to a lower extent, in seeds, leaves, stems and flowers.

It is found in the endoplasmic reticulum membrane. It localises to the plastid. The protein localises to the chloroplast membrane. Its subcellular location is the peroxisome membrane. It catalyses the reaction (R)-mevalonate + 2 NADP(+) + CoA = (3S)-3-hydroxy-3-methylglutaryl-CoA + 2 NADPH + 2 H(+). It functions in the pathway metabolic intermediate biosynthesis; (R)-mevalonate biosynthesis; (R)-mevalonate from acetyl-CoA: step 3/3. Its activity is regulated as follows. Competitive inhibition by mevinolin (Mev) is leading to a significant reduction of total ginsenoside in adventitious roots. Triggered by darkness. Functionally, catalyzes the synthesis of mevalonate, the specific precursor of all isoprenoid compounds present in plants. Component of the triterpene saponins (e.g. ginsenosides or panaxosides) and phytosterols biosynthetic pathways. This Panax ginseng (Korean ginseng) protein is 3-hydroxy-3-methylglutaryl coenzyme A reductase 2-A.